We begin with the raw amino-acid sequence, 358 residues long: Chorismate synthase (358 aa).

R48 is an NADP(+) binding site. FMN contacts are provided by residues R125–S127, S277, K292–S296, and R318.

Belongs to the chorismate synthase family. Homotetramer. The cofactor is FMNH2.

It carries out the reaction 5-O-(1-carboxyvinyl)-3-phosphoshikimate = chorismate + phosphate. Its pathway is metabolic intermediate biosynthesis; chorismate biosynthesis; chorismate from D-erythrose 4-phosphate and phosphoenolpyruvate: step 7/7. Its function is as follows. Catalyzes the anti-1,4-elimination of the C-3 phosphate and the C-6 proR hydrogen from 5-enolpyruvylshikimate-3-phosphate (EPSP) to yield chorismate, which is the branch point compound that serves as the starting substrate for the three terminal pathways of aromatic amino acid biosynthesis. This reaction introduces a second double bond into the aromatic ring system. The protein is Chorismate synthase of Desulfatibacillum aliphaticivorans.